A 593-amino-acid polypeptide reads, in one-letter code: UvrABC system protein C (593 aa).

Positions 14-91 constitute a GIY-YIG domain; the sequence is DSPGCYLHKD…IQENMPKYNI (78 aa). Residues 196 to 231 form the UVR domain; that stretch reads NKIVNGLTEKMKSAAMTMEFERAAEYRDLIEAISLL.

It belongs to the UvrC family. In terms of assembly, interacts with UvrB in an incision complex.

The protein resides in the cytoplasm. Functionally, the UvrABC repair system catalyzes the recognition and processing of DNA lesions. UvrC both incises the 5' and 3' sides of the lesion. The N-terminal half is responsible for the 3' incision and the C-terminal half is responsible for the 5' incision. This chain is UvrABC system protein C, found in Streptococcus agalactiae serotype III (strain NEM316).